Consider the following 419-residue polypeptide: Circumsporozoite protein (419 aa).

Residues 1–23 (MKNFNLLAVSSILLVDLFRTHWG) form the signal peptide. The tract at residues 50–111 (AQVRQSASRG…GNAGGNAGGN (62 aa)) is disordered. A compositionally biased stretch (basic and acidic residues) spans 65 to 95 (NPKEEDGADKKKKKDEKQVEPKKPRENKLKQ). The interval 81-89 (KQVEPKKPR) is required for the binding to heparan sulfate proteoglycans (HSPGs) on the surface of host hepatocytes. The tract at residues 92–96 (KLKQP) is region I; contains the proteolytic cleavage site. 38 consecutive repeat copies span residues 99-102 (NADG), 103-106 (NAGG), 107-110 (NAGG), 111-114 (NAGG), 115-118 (NAGG), 119-122 (NAGG), 123-126 (NADG), 127-130 (NAGG), 131-134 (NAGG), 135-138 (NAGG), 139-142 (NAGG), 143-146 (NAGG), 147-150 (NADG), 151-154 (NAGG), 155-158 (NADG), 159-162 (NAGG), 163-166 (NADG), 167-170 (NAGG), 171-174 (NAGG), 175-178 (NAGG), 179-182 (NADG), 183-186 (NAGG), 187-190 (NAGG), 191-194 (NAGG), 195-198 (NAGG), 199-202 (NAGG), 203-206 (NAGG), 207-210 (NAGG), 211-214 (NADG), 215-218 (NAGG), 219-222 (NAGG), 223-226 (NAGG), 227-230 (NADG), 231-234 (NAGG), 235-238 (NAGG), 239-242 (NAGG), 243-246 (NAGG), and 247-250 (NAGG). The 54 X 4 AA approximate tandem repeats of N-A-G-G stretch occupies residues 99 to 314 (NADGNAGGNA…GGNAGANAGN (216 aa)). Residues 146–237 (GNADGNAGGN…ADGNAGGNAG (92 aa)) form a disordered region. Residues 251–254 (TAGG) form a 39; approximate repeat. 13 tandem repeats follow at residues 255-258 (NADG), 259-262 (NAGG), 263-266 (NAGG), 267-270 (NAGG), 271-274 (NAGG), 275-278 (NAGG), 279-282 (NAGG), 283-286 (NAGG), 287-290 (NAGG), 291-294 (NAGG), 295-298 (NAGG), 299-302 (NAGG), and 303-306 (NAGG). The 53; approximate repeat unit spans residues 307-310 (NAGA). The stretch at 311-314 (NAGN) is one 54; approximate repeat. A disordered region spans residues 312 to 332 (AGNKKAGDAGAGQGQNNEAAN). The region spanning 345 to 397 (KIRSTISTEWSPCSVTCGKGVRMRKKVSAANKKPEELDVNDLETEVCTMDKCA) is the TSP type-1 domain. Intrachain disulfides connect C357-C391 and C361-C396. T360 is a glycosylation site (O-linked (Fuc) threonine). C396 carries the GPI-anchor amidated cysteine lipid modification. The propeptide at 397–419 (AGIFNVVSNSLRLVILLVLALFN) is removed in mature form.

It belongs to the plasmodium circumsporozoite protein family. In terms of processing, during host cell invasion, proteolytically cleaved at the cell membrane in the region I by a papain-like cysteine protease of parasite origin. Cleavage is triggered by the sporozoite contact with highly sulfated heparan sulfate proteoglycans (HSPGs) present on the host hepatocyte cell surface. Cleavage exposes the TSP type-1 (TSR) domain and is required for productive invasion of host hepatocytes but not for adhesion to the host cell membrane. Cleavage is dispensable for sporozoite development in the oocyst, motility and for traversal of host and vector cells. Post-translationally, O-glycosylated; maybe by POFUT2.

The protein resides in the cell membrane. It is found in the cytoplasm. Functionally, essential sporozoite protein. In the mosquito vector, required for sporozoite development in the oocyst, migration through the vector hemolymph and entry into the vector salivary glands. In the vertebrate host, required for sporozoite migration through the host dermis and infection of host hepatocytes. Binds to highly sulfated heparan sulfate proteoglycans (HSPGs) on the surface of host hepatocytes. In terms of biological role, in the vertebrate host, binds to highly sulfated heparan sulfate proteoglycans (HSPGs) on the surface of host hepatocytes and is required for sporozoite invasion of the host hepatocytes. This is Circumsporozoite protein from Plasmodium cynomolgi (strain Mulligan/NIH).